Here is a 531-residue protein sequence, read N- to C-terminus: MPVTMSQAFIDNFLGNSPKWFKIAILSFLVINPIVFYLNPFVAGWLLVVEFIFTLAMALKCYPLQPGGLLAIEAVIIGMTSPSQVLHEIEANLEVLLLLIFMVAGIYFMKQLLLFVFTKMITKIRSKVVVSLMFCIASAFLSAFLDALTVIAVIIAVAVGFYSIYHKVASGKSFTDDHDHTSDSHGEGHSLCEDELEAFRGFLRNLLMHAGIGTALGGVCTMVGEPQNLIIAAQANWQFGEFALRMGPVTVPVFISGIATCFLVEKFKWFGYGQQLPEAVHKILSDYASYEDAHRTKHDKIKLVIQAFVGVWLIVGLAFHLASVGLIGLSVIILTTAFNGVTNEHALGKAFEEALPFTALLAVFFAIVGVIIDQQLFAPVIQWALSYEGNTQLVIFYIANGLLSMVSDNVFVGTVYINEVKAALLDGQITRDQFDLLAVAINTGTNLPSVATPNGQAAFLFLLTSAIAPLIRLSYGRMVWMALPYTIVLSIVGILAIETGFLGEMTQYFYDSHMLIHHSVAEAAKGAVTGH.

Helical transmembrane passes span 23–45 (IAIL…VAGW), 66–86 (PGGL…SQVL), 97–117 (LLLI…LFVF), 130–164 (VSLM…FYSI), 206–226 (LLMH…VGEP), 244–264 (LRMG…CFLV), 307–327 (AFVG…VGLI), 352–372 (EEAL…GVII), 393–413 (LVIF…VFVG), 451–471 (ATPN…APLI), and 478–498 (MVWM…LAIE).

Belongs to the NhaB Na(+)/H(+) (TC 2.A.34) antiporter family.

The protein resides in the cell inner membrane. It carries out the reaction 2 Na(+)(in) + 3 H(+)(out) = 2 Na(+)(out) + 3 H(+)(in). Its function is as follows. Na(+)/H(+) antiporter that extrudes sodium in exchange for external protons. The polypeptide is Na(+)/H(+) antiporter NhaB (Shewanella loihica (strain ATCC BAA-1088 / PV-4)).